The primary structure comprises 506 residues: MIDNVITAIDRVAAEHPTRVAYDYEGTQYTYAQLKEGSDRLAGFFAETLPEHEPIIVYGGQTFDMVEVFLGLSKSGHAYIPIDTHSPNERITQVQDVAHTPAIIEVAPLPIAVPDVQIIRAPELHEAEKTHALISSLQHAVVGDDNYYIIFTSGTTGKPKGVQISHDNLLSYVNWNISDFGLKEGVVAMSQPPYSFDLSVMDLYPTLVLGGTLKALPKEVTDNFKTLFATLPKLGLNEWVSTPSFAEIALLDPNFNQDNYPDLTHFLFCGEELVNKTAQELITRFPKATVYNTYGPTETTVAVTGMAITQDIVDQYPRLPIGFAKPDTEIFVVDEQGNQVSAGTEGELMIVGPSVSKGYLNNPEKTAKAFFNVGSQRGYRSGDLATMTEDGMIFYRGRTDFQVKLHGYRIELEDVDHNLNQVSYIKQASTVPRYNKDHKVAQLIAFAVAKPNDFESDMKLTQAVKAELGKMVMEYMIPQRIIYRDKLPLTANGKVDRKALIAEVNH.

152–153 (TS) is an ATP binding site. Asp197 provides a ligand contact to D-alanine. 292–297 (NTYGPT) is a binding site for ATP. Val301 contributes to the D-alanine binding site. ATP-binding positions include Asp383, 395 to 398 (YRGR), and Lys494. Residue Lys494 coordinates D-alanine.

This sequence belongs to the ATP-dependent AMP-binding enzyme family. DltA subfamily.

The protein resides in the cytoplasm. The enzyme catalyses holo-[D-alanyl-carrier protein] + D-alanine + ATP = D-alanyl-[D-alanyl-carrier protein] + AMP + diphosphate. It participates in cell wall biogenesis; lipoteichoic acid biosynthesis. Functionally, catalyzes the first step in the D-alanylation of lipoteichoic acid (LTA), the activation of D-alanine and its transfer onto the D-alanyl carrier protein (Dcp) DltC. In an ATP-dependent two-step reaction, forms a high energy D-alanyl-AMP intermediate, followed by transfer of the D-alanyl residue as a thiol ester to the phosphopantheinyl prosthetic group of the Dcp. D-alanylation of LTA plays an important role in modulating the properties of the cell wall in Gram-positive bacteria, influencing the net charge of the cell wall. The polypeptide is D-alanine--D-alanyl carrier protein ligase (Lacticaseibacillus casei (strain BL23) (Lactobacillus casei)).